Here is a 322-residue protein sequence, read N- to C-terminus: Solute carrier family 35 member B1 (322 aa).

8 consecutive transmembrane segments (helical) span residues 12-32, 51-71, 85-105, 136-156, 168-188, 210-230, 243-263, and 285-305; these read LRLP…GILQ, FALT…KILI, WLYA…NSAL, YPMA…LFMY, TIGY…LTGV, LWST…WEFL, ILLF…TVVY, and VILF…LVFL. Residues 318-322 carry the Di-lysine motif motif; that stretch reads KKTSH.

This sequence belongs to the nucleotide-sugar transporter family. SLC35B subfamily.

The protein localises to the endoplasmic reticulum membrane. The catalysed reaction is ADP(in) + ATP(out) = ADP(out) + ATP(in). The enzyme catalyses UDP(out) + ATP(in) = UDP(in) + ATP(out). It catalyses the reaction UTP(out) + ATP(in) = UTP(in) + ATP(out). It carries out the reaction dATP(out) + ATP(in) = dATP(in) + ATP(out). Functionally, ATP:ADP antiporter that catalyzes the exchange of ATP and ADP across the endoplasmic reticulum (ER) membrane. Imports ATP from the cytosol to the ER lumen and exports ADP in the opposite direction. Regulates ER energy metabolism and protein biogenesis. Appears to be part of a calcium-dependent ER to cytosol low energy response axis, where calcium efflux from ER to the cytosol triggers ATP import into the ER lumen to maintain sufficient ATP supply. Provides ATP to ER chaperone HSPA5 that drives protein folding and trafficking in the ER. Can transport dATP, UTP or UDP in exchange for ATP, but the physiological relevance of this process remains to be established. This Bos taurus (Bovine) protein is Solute carrier family 35 member B1 (SLC35B1).